A 1014-amino-acid chain; its full sequence is EMILIN-1-A (1014 aa).

Residues 1 to 27 form the signal peptide; it reads MALYFVYLSTLLALILLGDNWAAGTYA. The region spanning 53–128 is the EMI domain; sequence HRNWCAYVVT…HGYSGDDCSD (76 aa). Intrachain disulfides connect Cys57–Cys118, Cys84–Cys89, and Cys117–Cys126. Disordered stretches follow at residues 125-150 and 811-869; these read DCSD…SDSD and QDFT…ANVP. Residues 134–150 are compositionally biased toward basic and acidic residues; the sequence is HDSRARPTGEEGRSDSD. Residues 145–179 adopt a coiled-coil conformation; it reads GRSDSDRIRQLEEQIQSLNKNLHNLQKKIYEESQR. One can recognise a Collagen-like domain in the interval 815–865; it reads GPPGLPGPQGEKGSKGPPGPRGPLGKEGPQGRVGPVGPPGLRGEQGPPGKD. A compositionally biased stretch (low complexity) spans 840-856; sequence KEGPQGRVGPVGPPGLR. The C1q domain maps to 866–1012; sequence ANVPRLSFSA…GMLLYEESED (147 aa).

Its subcellular location is the secreted. The protein localises to the extracellular space. It localises to the extracellular matrix. In terms of biological role, may be responsible for anchoring smooth muscle cells to elastic fibers, and may be involved not only in the formation of the elastic fiber, but also in the processes that regulate vessel assembly. Has cell adhesive capacity. This is EMILIN-1-A from Danio rerio (Zebrafish).